Consider the following 296-residue polypeptide: Acetylglutamate kinase (296 aa).

Substrate is bound by residues G67–G68, R89, and N194.

Belongs to the acetylglutamate kinase family. ArgB subfamily.

The protein resides in the cytoplasm. The catalysed reaction is N-acetyl-L-glutamate + ATP = N-acetyl-L-glutamyl 5-phosphate + ADP. The protein operates within amino-acid biosynthesis; L-arginine biosynthesis; N(2)-acetyl-L-ornithine from L-glutamate: step 2/4. Catalyzes the ATP-dependent phosphorylation of N-acetyl-L-glutamate. This Syntrophus aciditrophicus (strain SB) protein is Acetylglutamate kinase.